Consider the following 92-residue polypeptide: Putative regulatory protein CA_C1717 (92 aa).

Belongs to the RemA family.

The sequence is that of Putative regulatory protein CA_C1717 from Clostridium acetobutylicum (strain ATCC 824 / DSM 792 / JCM 1419 / IAM 19013 / LMG 5710 / NBRC 13948 / NRRL B-527 / VKM B-1787 / 2291 / W).